The primary structure comprises 259 residues: Small ribosomal subunit protein uS2 (259 aa).

Positions 224–259 (GKQGEDDQQVAPAEDVAEEVSDESLQDLKNSVEGND) are disordered. The segment covering 238 to 248 (DVAEEVSDESL) has biased composition (acidic residues). Residues 250-259 (DLKNSVEGND) are compositionally biased toward polar residues.

This sequence belongs to the universal ribosomal protein uS2 family.

The sequence is that of Small ribosomal subunit protein uS2 from Limosilactobacillus fermentum (strain NBRC 3956 / LMG 18251) (Lactobacillus fermentum).